Reading from the N-terminus, the 477-residue chain is Cysteine--tRNA ligase (477 aa).

Residue Cys34 coordinates Zn(2+). A 'HIGH' region motif is present at residues Pro36–Asn46. Zn(2+) is bound by residues Cys235, His260, and Glu264. The 'KMSKS' region signature appears at Lys293–Ser297. ATP is bound at residue Lys296.

Belongs to the class-I aminoacyl-tRNA synthetase family. Monomer. Zn(2+) serves as cofactor.

Its subcellular location is the cytoplasm. The enzyme catalyses tRNA(Cys) + L-cysteine + ATP = L-cysteinyl-tRNA(Cys) + AMP + diphosphate. The protein is Cysteine--tRNA ligase of Mesorhizobium japonicum (strain LMG 29417 / CECT 9101 / MAFF 303099) (Mesorhizobium loti (strain MAFF 303099)).